The sequence spans 252 residues: Autophagy-related protein 27 (252 aa).

A signal peptide spans 1 to 15; it reads MILASLLTFATAALA. One can recognise an MRH domain in the interval 16–161; that stretch reads FDCSDKELER…SMKTKAACIT (146 aa). Over 16–176 the chain is Lumenal; the sequence is FDCSDKELER…KKEKHDNGES (161 aa). 3 cysteine pairs are disulfide-bonded: Cys18/Cys57, Cys66/Cys73, and Cys130/Cys159. Asn49 is a glycosylation site (N-linked (GlcNAc...) asparagine). Residues 177-197 traverse the membrane as a helical segment; sequence WGWFTWIFIFLVLFLSIYIIG. The Cytoplasmic segment spans residues 198–252; sequence GAWFQYNKGNAIDFQSALKEVVENFIELLKGLPSFGKEIIEKFTGRSNRGEYSAV.

This sequence belongs to the ATG27 family.

The protein resides in the cytoplasmic vesicle membrane. The protein localises to the golgi apparatus membrane. It is found in the mitochondrion membrane. Its subcellular location is the preautophagosomal structure membrane. Its function is as follows. Plays a key role in autophagy. Effector of VPS34 phosphatidylinositol 3-phosphate kinase signaling. Regulates the cytoplasm to vacuole transport (Cvt) vesicle formation. Plays a role in ATG protein retrieval from the pre-autophagosomal structure (PAS) and is especially required for autophagy-dependent cycling of ATG9. Finally, plays an important role in biofilm formation and resistance to antifungal compounds such as fluconazole, itraconazole, terbinafine and caspofungin. This is Autophagy-related protein 27 from Candida albicans (strain SC5314 / ATCC MYA-2876) (Yeast).